The following is a 165-amino-acid chain: MSKPILSTGLRWLWLVVVVLIVDLGSKALILQHFALGETVSLFPSLNLHYARNYGAAFSFLADKGGWQRWFFAGIAIGICVLLVVMMYRAKASQKLNNIAYALIIGGALGNLFDRLWHGFVVDMIDFYVGDWHFATFNLADTAICIGAALVVLEGFLPSKQKATA.

Transmembrane regions (helical) follow at residues 12–32 (WLWL…LILQ), 70–90 (WFFA…MYRA), and 102–122 (ALII…GFVV). Residues aspartate 123 and aspartate 141 contribute to the active site. The chain crosses the membrane as a helical span at residues 137–157 (FNLADTAICIGAALVVLEGFL).

This sequence belongs to the peptidase A8 family.

It localises to the cell inner membrane. The enzyme catalyses Release of signal peptides from bacterial membrane prolipoproteins. Hydrolyzes -Xaa-Yaa-Zaa-|-(S,diacylglyceryl)Cys-, in which Xaa is hydrophobic (preferably Leu), and Yaa (Ala or Ser) and Zaa (Gly or Ala) have small, neutral side chains.. The protein operates within protein modification; lipoprotein biosynthesis (signal peptide cleavage). Functionally, this protein specifically catalyzes the removal of signal peptides from prolipoproteins. The polypeptide is Lipoprotein signal peptidase (Cronobacter sakazakii (strain ATCC BAA-894) (Enterobacter sakazakii)).